The following is a 348-amino-acid chain: Adenosine deaminase (348 aa).

The Zn(2+) site is built by H16 and H18. Substrate contacts are provided by H18, D20, and G174. H201 contributes to the Zn(2+) binding site. Residue E204 is the Proton donor of the active site. Zn(2+) is bound at residue D282.

The protein belongs to the metallo-dependent hydrolases superfamily. Adenosine and AMP deaminases family. Adenosine deaminase subfamily. It depends on Zn(2+) as a cofactor.

The enzyme catalyses adenosine + H2O + H(+) = inosine + NH4(+). It catalyses the reaction 2'-deoxyadenosine + H2O + H(+) = 2'-deoxyinosine + NH4(+). In terms of biological role, catalyzes the hydrolytic deamination of adenosine and 2-deoxyadenosine. The polypeptide is Adenosine deaminase (Clostridium kluyveri (strain ATCC 8527 / DSM 555 / NBRC 12016 / NCIMB 10680 / K1)).